A 147-amino-acid polypeptide reads, in one-letter code: Hemoglobin subunit beta-2 (147 aa).

Val-2 is modified (N-acetylvaline). The 145-residue stretch at 3 to 147 folds into the Globin domain; sequence HLTDAEKATV…VASALAHKYH (145 aa). Ser-13 carries the phosphoserine modification. The residue at position 18 (Lys-18) is an N6-succinyllysine. Residues Ser-51 and Ser-53 each carry the phosphoserine modification. The heme b site is built by His-64 and His-93. At Arg-105 the chain carries Asymmetric dimethylarginine. The residue at position 124 (Thr-124) is a Phosphothreonine. Residue Cys-126 is modified to Phosphoserine; in variant Ser-126.

This sequence belongs to the globin family. As to quaternary structure, heterotetramer of two alpha chains and two beta chains. In terms of tissue distribution, red blood cells.

Functionally, involved in oxygen transport from the lung to the various peripheral tissues. The sequence is that of Hemoglobin subunit beta-2 from Rattus norvegicus (Rat).